We begin with the raw amino-acid sequence, 117 residues long: Large ribosomal subunit protein bL20 (117 aa).

The protein belongs to the bacterial ribosomal protein bL20 family.

Its function is as follows. Binds directly to 23S ribosomal RNA and is necessary for the in vitro assembly process of the 50S ribosomal subunit. It is not involved in the protein synthesizing functions of that subunit. The sequence is that of Large ribosomal subunit protein bL20 from Neorickettsia sennetsu (strain ATCC VR-367 / Miyayama) (Ehrlichia sennetsu).